A 504-amino-acid chain; its full sequence is Taurochenodeoxycholic 6 alpha-hydroxylase (504 aa).

2 helical membrane-spanning segments follow: residues Leu-6–Leu-26 and Ala-110–Gly-130. Residue Cys-451 coordinates heme.

Belongs to the cytochrome P450 family. Heme is required as a cofactor. As to expression, primarily expressed in liver. Low expression in kidney.

It is found in the endoplasmic reticulum membrane. It catalyses the reaction taurochenodeoxycholate + reduced [NADPH--hemoprotein reductase] + O2 = taurohyocholate + oxidized [NADPH--hemoprotein reductase] + H2O + H(+). The catalysed reaction is lithocholate + reduced [NADPH--hemoprotein reductase] + O2 = hyodeoxycholate + oxidized [NADPH--hemoprotein reductase] + H2O + H(+). Functionally, catalyzes the 6 alpha hydroxylation oxidation of taurodeoxycholate to produce the pig specific bile acid taurohyocholic acid. This Sus scrofa (Pig) protein is Taurochenodeoxycholic 6 alpha-hydroxylase (CYP4A21).